Consider the following 275-residue polypeptide: NH(3)-dependent NAD(+) synthetase (275 aa).

46-53 is an ATP binding site; sequence GISGGQDS. Residue Asp52 coordinates Mg(2+). Residue Arg140 coordinates deamido-NAD(+). Thr160 contacts ATP. Residue Glu165 participates in Mg(2+) binding. Deamido-NAD(+)-binding residues include Lys173 and Asp180. Residues Lys189 and Thr211 each coordinate ATP. Residue 260 to 261 participates in deamido-NAD(+) binding; that stretch reads HK.

The protein belongs to the NAD synthetase family. In terms of assembly, homodimer.

It catalyses the reaction deamido-NAD(+) + NH4(+) + ATP = AMP + diphosphate + NAD(+) + H(+). The protein operates within cofactor biosynthesis; NAD(+) biosynthesis; NAD(+) from deamido-NAD(+) (ammonia route): step 1/1. Catalyzes the ATP-dependent amidation of deamido-NAD to form NAD. Uses ammonia as a nitrogen source. The chain is NH(3)-dependent NAD(+) synthetase from Escherichia coli O157:H7.